Here is a 42-residue protein sequence, read N- to C-terminus: Statherin (42 aa).

Residues 1-6 (DSSEEK) are hydroxyapatite-binding; inhibits crystal growth. Phosphoserine is present on residues Ser-2 and Ser-3. Positions 18–42 (RYGPYQPFVPPPLYPQPYQPYQPQY) are disordered. The tract at residues 18-42 (RYGPYQPFVPPPLYPQPYQPYQPQY) is hydrophobic; inhibits precipitation of calcium phosphate salts. Residues 24-42 (PFVPPPLYPQPYQPYQPQY) show a composition bias toward pro residues.

Belongs to the histatin/statherin family. In terms of tissue distribution, secreted by parotid and submandibular glands.

It localises to the secreted. In terms of biological role, salivary protein that stabilizes saliva supersaturated with calcium salts by inhibiting the precipitation of calcium phosphate salts. It also modulates hydroxyapatite crystal formation on the tooth surface. The sequence is that of Statherin (STATH) from Macaca arctoides (Stump-tailed macaque).